The chain runs to 266 residues: ATP synthase subunit a (266 aa).

6 helical membrane passes run 38-58 (KQML…LLAA), 99-119 (LLFS…IPLI), 126-146 (HVGG…AIGV), 162-182 (GVPV…NFLV), 191-211 (LFAT…GIEY), and 224-244 (SVLV…IMAL).

It belongs to the ATPase A chain family. In terms of assembly, F-type ATPases have 2 components, CF(1) - the catalytic core - and CF(0) - the membrane proton channel. CF(1) has five subunits: alpha(3), beta(3), gamma(1), delta(1), epsilon(1). CF(0) has three main subunits: a(1), b(2) and c(9-12). The alpha and beta chains form an alternating ring which encloses part of the gamma chain. CF(1) is attached to CF(0) by a central stalk formed by the gamma and epsilon chains, while a peripheral stalk is formed by the delta and b chains.

Its subcellular location is the cell membrane. In terms of biological role, key component of the proton channel; it plays a direct role in the translocation of protons across the membrane. This Arthrobacter sp. (strain FB24) protein is ATP synthase subunit a.